We begin with the raw amino-acid sequence, 324 residues long: MKKIAVLTSGGDAPGLNACIRAVVRAGHYYNCEVIGVRRGFKGLIEKQFISLTPRDVGGIIDKGGTFLLSAREDRFLEYKYRKIAANNIREEKIDGLFVIGGNGSFQGAYLLSKEFGIPIIGIPKTIDNDTYGTEYTIGFDTAVNNAVDAIDKIRDTSESHERVFVIEVMGRKSGFLALAAGISTGADVTLIPEYPFPMHVIVKSIVDALNRGKKFAIVVVAEGVASAKEIADILNEKLKPFDFGGVRYSVLGYIQRGGSPTSYDRIMASRFGVFAVEEFMRGNRDFMVALENGKILSKPLEVSFGRIKKPDLKDFELNNILTI.

Position 11 (Gly11) interacts with ATP. ADP is bound at residue 21 to 25 (RAVVR). ATP contacts are provided by residues 72–73 (RE) and 102–105 (GNGS). Residue Asn103 coordinates Mg(2+). 126–128 (TID) is a binding site for substrate. Catalysis depends on Asp128, which acts as the Proton acceptor. Arg155 is a binding site for ADP. Substrate-binding positions include Arg163 and 170–172 (MGR). ADP-binding positions include 186 to 188 (GAD), Arg212, and 214 to 216 (KKF). Residues Glu223, Arg248, and 254-257 (YIQR) contribute to the substrate site.

The protein belongs to the phosphofructokinase type A (PFKA) family. ATP-dependent PFK group I subfamily. Prokaryotic clade 'B1' sub-subfamily. Homotetramer. It depends on Mg(2+) as a cofactor.

Its subcellular location is the cytoplasm. The enzyme catalyses beta-D-fructose 6-phosphate + ATP = beta-D-fructose 1,6-bisphosphate + ADP + H(+). Its pathway is carbohydrate degradation; glycolysis; D-glyceraldehyde 3-phosphate and glycerone phosphate from D-glucose: step 3/4. Allosterically activated by ADP and other diphosphonucleosides, and allosterically inhibited by phosphoenolpyruvate. Its function is as follows. Catalyzes the phosphorylation of D-fructose 6-phosphate to fructose 1,6-bisphosphate by ATP, the first committing step of glycolysis. The chain is ATP-dependent 6-phosphofructokinase from Persephonella marina (strain DSM 14350 / EX-H1).